The sequence spans 127 residues: Small ribosomal subunit protein eS8 (127 aa).

Residues 1-33 (MAIWQGKSMKKPSGGRAKMNRGKRKYELGREPA) are disordered.

The protein belongs to the eukaryotic ribosomal protein eS8 family. Part of the 30S ribosomal subunit.

The chain is Small ribosomal subunit protein eS8 (rps8e) from Methanothermobacter thermautotrophicus (strain ATCC 29096 / DSM 1053 / JCM 10044 / NBRC 100330 / Delta H) (Methanobacterium thermoautotrophicum).